The primary structure comprises 383 residues: Putative 8-amino-7-oxononanoate synthase (383 aa).

Arg22 provides a ligand contact to substrate. Position 109–110 (109–110 (GY)) interacts with pyridoxal 5'-phosphate. His134 is a binding site for substrate. Residues Ser182, 207-210 (DDAH), and 236-239 (TLSK) each bind pyridoxal 5'-phosphate. An N6-(pyridoxal phosphate)lysine modification is found at Lys239. Substrate is bound at residue Thr348.

It belongs to the class-II pyridoxal-phosphate-dependent aminotransferase family. BioF subfamily. As to quaternary structure, homodimer. Pyridoxal 5'-phosphate serves as cofactor.

The catalysed reaction is 6-carboxyhexanoyl-[ACP] + L-alanine + H(+) = (8S)-8-amino-7-oxononanoate + holo-[ACP] + CO2. It functions in the pathway cofactor biosynthesis; biotin biosynthesis. Its function is as follows. Catalyzes the decarboxylative condensation of pimeloyl-[acyl-carrier protein] and L-alanine to produce 8-amino-7-oxononanoate (AON), [acyl-carrier protein], and carbon dioxide. The sequence is that of Putative 8-amino-7-oxononanoate synthase (bioF) from Caulobacter sp. (strain K31).